The primary structure comprises 155 residues: Ribosomal RNA large subunit methyltransferase H (155 aa).

S-adenosyl-L-methionine contacts are provided by residues Leu-72, Gly-103, and Leu-122–Leu-127.

This sequence belongs to the RNA methyltransferase RlmH family. In terms of assembly, homodimer.

It is found in the cytoplasm. The enzyme catalyses pseudouridine(1915) in 23S rRNA + S-adenosyl-L-methionine = N(3)-methylpseudouridine(1915) in 23S rRNA + S-adenosyl-L-homocysteine + H(+). Its function is as follows. Specifically methylates the pseudouridine at position 1915 (m3Psi1915) in 23S rRNA. The chain is Ribosomal RNA large subunit methyltransferase H from Paracidovorax citrulli (strain AAC00-1) (Acidovorax citrulli).